Reading from the N-terminus, the 221-residue chain is Potassium voltage-gated channel subfamily E member 4 (221 aa).

Over 1 to 86 the chain is Extracellular; sequence MHFLTIYPNC…AGGGSGNGNE (86 aa). N-linked (GlcNAc...) asparagine glycosylation occurs at Asn-9. Polar residues predominate over residues 58–72; that stretch reads LNSTHPGTAASSSPL. The tract at residues 58–77 is disordered; the sequence is LNSTHPGTAASSSPLESRAA. The helical transmembrane segment at 87 to 107 threads the bilayer; sequence YFYILVVMSFYGIFLIGIMLG. Topologically, residues 108–221 are cytoplasmic; that stretch reads YMKSKRREKK…GSSENIHQNS (114 aa). The tract at residues 175–221 is disordered; that stretch reads SVSSESSSPDVHLTIQEEGADDELEETSETPLNESSEGSSENIHQNS. Acidic residues predominate over residues 192 to 202; the sequence is EGADDELEETS. Over residues 203-221 the composition is skewed to polar residues; that stretch reads ETPLNESSEGSSENIHQNS.

Belongs to the potassium channel KCNE family. As to quaternary structure, forms heterooligomers with KCNA3, inhibiting its activity by impairing localization to the cell membrane. The stoichiometry of KCNA3 and KCNE4 in the heterooligomers are 4:1, 4:2, 4:3 or 4:4 respectively. Increasing the number of KCNE4 subunits steadily slows the activation KCNA3 and decreases its abundance at the cell membrane. However, a single subunit of KCNE4 is sufficient for the cooperative enhancement of the inactivating function of the channel. However, a single subunit of KCNE4 is sufficient for the cooperative enhancement of the inactivating function of the channel. Interacts with KCNQ1; impairs KCNQ1 localization in lipid rafts and inhibits voltage-gated potassium channel activity. As to expression, predominantly expressed in embryo and adult uterus. Low expression found in kidney, small intestine, lung and heart. Detected in kidney, thymus, and uterus (at protein level).

It is found in the membrane. Functionally, ancillary protein that functions as a regulatory subunit of the voltage-gated potassium (Kv) channel complex composed of pore-forming and potassium-conducting alpha subunits and of regulatory beta subunits. KCNE4 beta subunit modulates the gating kinetics and enhances stability of the channel complex. Associates with KCNQ1/KVLTQ1 alpha subunit to inhibit potassium currents. In terms of biological role, may inhibit KCNQ4-mediated potassium currents. The protein is Potassium voltage-gated channel subfamily E member 4 of Homo sapiens (Human).